Reading from the N-terminus, the 324-residue chain is Zinc finger C2HC domain-containing protein 1A (324 aa).

The C2HC/C3H-type 1 zinc-finger motif lies at 15-44 (DLLPCKICGRTFFPLALKKHGPICQKTATK). Zn(2+)-binding residues include C19, C22, H34, and C38. Positions 43 to 83 (TKKRKTFDSSRQRAEGTDIPTVKPLKPRPEPPKKPSNWRRK) are disordered. A compositionally biased stretch (basic and acidic residues) spans 48-58 (TFDSSRQRAEG). The segment at 118–147 (DYIQCPYCQRRFNENAADRHINFCKEQAAR) adopts a C2HC/C3H-type 2 zinc-finger fold. C122, C125, H137, and C141 together coordinate Zn(2+). A disordered region spans residues 149–225 (SNKGKFSTDS…NKPQTLSPSH (77 aa)). The span at 176–187 (SNPPGIPSSGSS) shows a compositional bias: low complexity. Composition is skewed to polar residues over residues 188 to 198 (RLPQPSTTSKT) and 206 to 223 (KASSVNSPLGNKPQTLSP). S222 is subject to Phosphoserine. At T243 the chain carries Phosphothreonine. S291 carries the phosphoserine modification.

Belongs to the ZC2HC1 family. The cofactor is Zn(2+).

The protein is Zinc finger C2HC domain-containing protein 1A (Zc2hc1a) of Mus musculus (Mouse).